The sequence spans 401 residues: Argininosuccinate synthase (401 aa).

8-16 is an ATP binding site; that stretch reads AYSGGLDTS. Y87 contacts L-citrulline. G117 provides a ligand contact to ATP. L-aspartate contacts are provided by T119, N123, and D124. Residue N123 coordinates L-citrulline. The L-citrulline site is built by R127, S175, E259, and Y271.

The protein belongs to the argininosuccinate synthase family. Type 1 subfamily. Homotetramer.

The protein localises to the cytoplasm. It catalyses the reaction L-citrulline + L-aspartate + ATP = 2-(N(omega)-L-arginino)succinate + AMP + diphosphate + H(+). It participates in amino-acid biosynthesis; L-arginine biosynthesis; L-arginine from L-ornithine and carbamoyl phosphate: step 2/3. In Arthrobacter sp. (strain FB24), this protein is Argininosuccinate synthase.